We begin with the raw amino-acid sequence, 455 residues long: MSLDIVILAAGQGTRMRSALPKVLHPVAGNSMLGHVIHSARQLQPQGIHVVIGHGAEQVRERLAAEDLNFVMQDKQLGTGHAVAQALPAITADTVLVLYGDVPLIEVETLQRLLAKVSEQQLGLLTVTLQDPTGYGRIVRDAAGNVTAIVEHKDASEAQKAIKEGNTGILAMPAARLADWMGRLSNNNAQGEYYLTDVIAMAVADGLVVATEQPHDPMEVQGANDRRQLSELERHYQLREGRRLMAQGVTLRDPARFDVRGEVTVGRDVLIDINVILEGKVVIEDDVQIGPNCVIKDSTLRKGVVIKANSHIEGAVMGEGSDAGPFARLRPGSVLEAKAHVGNFVELKNAHLGEGAKAGHLTYLGDAEIGARTNIGAGTITCNYDGANKFRTVMGEDVFIGSNNSLVAPVEIQAGATTAAGSTITQTVEAGQLGVARARQRNIEGWKRPEKIKKS.

Positions 1 to 226 are pyrophosphorylase; sequence MSLDIVILAA…PMEVQGANDR (226 aa). Residues 8–11, K22, Q73, 78–79, 99–101, G136, E151, N166, and N224 contribute to the UDP-N-acetyl-alpha-D-glucosamine site; these read LAAG, GT, and YGD. D101 contacts Mg(2+). Mg(2+) is bound at residue N224. Residues 227 to 247 are linker; the sequence is RQLSELERHYQLREGRRLMAQ. An N-acetyltransferase region spans residues 248 to 455; that stretch reads GVTLRDPARF…WKRPEKIKKS (208 aa). 2 residues coordinate UDP-N-acetyl-alpha-D-glucosamine: R330 and K348. H360 (proton acceptor) is an active-site residue. UDP-N-acetyl-alpha-D-glucosamine is bound by residues Y363 and N374. Acetyl-CoA is bound by residues A377, 383–384, S402, A420, and R437; that span reads NY.

This sequence in the N-terminal section; belongs to the N-acetylglucosamine-1-phosphate uridyltransferase family. In the C-terminal section; belongs to the transferase hexapeptide repeat family. In terms of assembly, homotrimer. Mg(2+) serves as cofactor.

The protein localises to the cytoplasm. The enzyme catalyses alpha-D-glucosamine 1-phosphate + acetyl-CoA = N-acetyl-alpha-D-glucosamine 1-phosphate + CoA + H(+). It carries out the reaction N-acetyl-alpha-D-glucosamine 1-phosphate + UTP + H(+) = UDP-N-acetyl-alpha-D-glucosamine + diphosphate. It functions in the pathway nucleotide-sugar biosynthesis; UDP-N-acetyl-alpha-D-glucosamine biosynthesis; N-acetyl-alpha-D-glucosamine 1-phosphate from alpha-D-glucosamine 6-phosphate (route II): step 2/2. The protein operates within nucleotide-sugar biosynthesis; UDP-N-acetyl-alpha-D-glucosamine biosynthesis; UDP-N-acetyl-alpha-D-glucosamine from N-acetyl-alpha-D-glucosamine 1-phosphate: step 1/1. Its pathway is bacterial outer membrane biogenesis; LPS lipid A biosynthesis. Catalyzes the last two sequential reactions in the de novo biosynthetic pathway for UDP-N-acetylglucosamine (UDP-GlcNAc). The C-terminal domain catalyzes the transfer of acetyl group from acetyl coenzyme A to glucosamine-1-phosphate (GlcN-1-P) to produce N-acetylglucosamine-1-phosphate (GlcNAc-1-P), which is converted into UDP-GlcNAc by the transfer of uridine 5-monophosphate (from uridine 5-triphosphate), a reaction catalyzed by the N-terminal domain. The protein is Bifunctional protein GlmU of Pseudomonas entomophila (strain L48).